Here is a 95-residue protein sequence, read N- to C-terminus: Aspartyl/glutamyl-tRNA(Asn/Gln) amidotransferase subunit C (95 aa).

Belongs to the GatC family. In terms of assembly, heterotrimer of A, B and C subunits.

The catalysed reaction is L-glutamyl-tRNA(Gln) + L-glutamine + ATP + H2O = L-glutaminyl-tRNA(Gln) + L-glutamate + ADP + phosphate + H(+). It carries out the reaction L-aspartyl-tRNA(Asn) + L-glutamine + ATP + H2O = L-asparaginyl-tRNA(Asn) + L-glutamate + ADP + phosphate + 2 H(+). Its function is as follows. Allows the formation of correctly charged Asn-tRNA(Asn) or Gln-tRNA(Gln) through the transamidation of misacylated Asp-tRNA(Asn) or Glu-tRNA(Gln) in organisms which lack either or both of asparaginyl-tRNA or glutaminyl-tRNA synthetases. The reaction takes place in the presence of glutamine and ATP through an activated phospho-Asp-tRNA(Asn) or phospho-Glu-tRNA(Gln). The protein is Aspartyl/glutamyl-tRNA(Asn/Gln) amidotransferase subunit C of Pelodictyon phaeoclathratiforme (strain DSM 5477 / BU-1).